The following is a 256-amino-acid chain: 5-keto-4-deoxy-D-glucarate aldolase (256 aa).

Catalysis depends on His-50, which acts as the Proton acceptor. Gln-151 contributes to the substrate binding site. Glu-153 contributes to the Mg(2+) binding site. Ser-178 and Asp-179 together coordinate substrate. Asp-179 lines the Mg(2+) pocket.

Belongs to the HpcH/HpaI aldolase family. KDGluc aldolase subfamily. In terms of assembly, homohexamer; trimer of dimers. Mg(2+) is required as a cofactor.

It catalyses the reaction 5-dehydro-4-deoxy-D-glucarate = 2-hydroxy-3-oxopropanoate + pyruvate. The enzyme catalyses 2-dehydro-3-deoxy-D-glucarate = 2-hydroxy-3-oxopropanoate + pyruvate. It participates in carbohydrate acid metabolism; galactarate degradation; D-glycerate from galactarate: step 2/3. Its function is as follows. Catalyzes the reversible retro-aldol cleavage of both 5-keto-4-deoxy-D-glucarate and 2-keto-3-deoxy-D-glucarate to pyruvate and tartronic semialdehyde. The protein is 5-keto-4-deoxy-D-glucarate aldolase of Shigella sonnei (strain Ss046).